A 329-amino-acid polypeptide reads, in one-letter code: Ketol-acid reductoisomerase (NADP(+)) (329 aa).

Residues 2-182 (VEIYYDDDAS…GGTRAGALRT (181 aa)) enclose the KARI N-terminal Rossmann domain. Residues 25–28 (YGSQ), S51, and S53 each bind NADP(+). Residue H108 is part of the active site. An NADP(+)-binding site is contributed by G134. A KARI C-terminal knotted domain is found at 183 to 328 (TFTEETETDL…AKLRPMMSWI (146 aa)). Mg(2+)-binding residues include D191, E195, E227, and E231. S252 is a substrate binding site.

Belongs to the ketol-acid reductoisomerase family. The cofactor is Mg(2+).

It carries out the reaction (2R)-2,3-dihydroxy-3-methylbutanoate + NADP(+) = (2S)-2-acetolactate + NADPH + H(+). The catalysed reaction is (2R,3R)-2,3-dihydroxy-3-methylpentanoate + NADP(+) = (S)-2-ethyl-2-hydroxy-3-oxobutanoate + NADPH + H(+). It functions in the pathway amino-acid biosynthesis; L-isoleucine biosynthesis; L-isoleucine from 2-oxobutanoate: step 2/4. The protein operates within amino-acid biosynthesis; L-valine biosynthesis; L-valine from pyruvate: step 2/4. Involved in the biosynthesis of branched-chain amino acids (BCAA). Catalyzes an alkyl-migration followed by a ketol-acid reduction of (S)-2-acetolactate (S2AL) to yield (R)-2,3-dihydroxy-isovalerate. In the isomerase reaction, S2AL is rearranged via a Mg-dependent methyl migration to produce 3-hydroxy-3-methyl-2-ketobutyrate (HMKB). In the reductase reaction, this 2-ketoacid undergoes a metal-dependent reduction by NADPH to yield (R)-2,3-dihydroxy-isovalerate. This is Ketol-acid reductoisomerase (NADP(+)) from Frankia casuarinae (strain DSM 45818 / CECT 9043 / HFP020203 / CcI3).